We begin with the raw amino-acid sequence, 211 residues long: Thiamine-phosphate synthase (211 aa).

4-amino-2-methyl-5-(diphosphooxymethyl)pyrimidine-binding positions include Gln-37 to Lys-41 and Asn-69. The Mg(2+) site is built by Asp-70 and Asp-89. Position 108 (Ser-108) interacts with 4-amino-2-methyl-5-(diphosphooxymethyl)pyrimidine. Thr-134–Thr-136 lines the 2-[(2R,5Z)-2-carboxy-4-methylthiazol-5(2H)-ylidene]ethyl phosphate pocket. Lys-137 contacts 4-amino-2-methyl-5-(diphosphooxymethyl)pyrimidine. Residues Gly-166 and Val-186 to Ser-187 contribute to the 2-[(2R,5Z)-2-carboxy-4-methylthiazol-5(2H)-ylidene]ethyl phosphate site.

Belongs to the thiamine-phosphate synthase family. The cofactor is Mg(2+).

The catalysed reaction is 2-[(2R,5Z)-2-carboxy-4-methylthiazol-5(2H)-ylidene]ethyl phosphate + 4-amino-2-methyl-5-(diphosphooxymethyl)pyrimidine + 2 H(+) = thiamine phosphate + CO2 + diphosphate. It catalyses the reaction 2-(2-carboxy-4-methylthiazol-5-yl)ethyl phosphate + 4-amino-2-methyl-5-(diphosphooxymethyl)pyrimidine + 2 H(+) = thiamine phosphate + CO2 + diphosphate. The enzyme catalyses 4-methyl-5-(2-phosphooxyethyl)-thiazole + 4-amino-2-methyl-5-(diphosphooxymethyl)pyrimidine + H(+) = thiamine phosphate + diphosphate. The protein operates within cofactor biosynthesis; thiamine diphosphate biosynthesis; thiamine phosphate from 4-amino-2-methyl-5-diphosphomethylpyrimidine and 4-methyl-5-(2-phosphoethyl)-thiazole: step 1/1. Condenses 4-methyl-5-(beta-hydroxyethyl)thiazole monophosphate (THZ-P) and 2-methyl-4-amino-5-hydroxymethyl pyrimidine pyrophosphate (HMP-PP) to form thiamine monophosphate (TMP). This chain is Thiamine-phosphate synthase, found in Salmonella schwarzengrund (strain CVM19633).